The chain runs to 639 residues: Chaperone protein DnaK (639 aa).

The residue at position 198 (Thr198) is a Phosphothreonine; by autocatalysis. Residues 605–624 (SQAQGGAETNAGKQANAAAD) are disordered.

This sequence belongs to the heat shock protein 70 family.

Functionally, acts as a chaperone. This Shewanella putrefaciens (strain CN-32 / ATCC BAA-453) protein is Chaperone protein DnaK.